The primary structure comprises 309 residues: MQTKPFRIGTRGSPLAMAQTHETRDRLAAAHGLPPEMFEIVILSTKGDRITDRSLAEIGGKGLFTEELEQQLLSGDLDFAVHSSKDMPTKLPEGLFLSAFLPREDIRDAFVGRSAKRLVDLPQGATVGSSSLRRQALIRRLRPDIDVITYRGQVETRLRKLAEGQVDGTLLAYAGLRRLGMEHVPTELLDPEEFPPAPAQGAICVEARIGDDRINTLLAAIDDPRTHEAVSCERGFLATLDGSCRTPIAGYAQSDGTHIRFAGMILTPDGTTSHQIEIDGRAADAERLGQEAGERIRAKAGPGFFSSWS.

S-(dipyrrolylmethanemethyl)cysteine is present on Cys244.

Belongs to the HMBS family. As to quaternary structure, monomer. Requires dipyrromethane as cofactor.

The catalysed reaction is 4 porphobilinogen + H2O = hydroxymethylbilane + 4 NH4(+). Its pathway is porphyrin-containing compound metabolism; protoporphyrin-IX biosynthesis; coproporphyrinogen-III from 5-aminolevulinate: step 2/4. Tetrapolymerization of the monopyrrole PBG into the hydroxymethylbilane pre-uroporphyrinogen in several discrete steps. This is Porphobilinogen deaminase from Rhizobium meliloti (strain 1021) (Ensifer meliloti).